Consider the following 382-residue polypeptide: Histidine biosynthesis bifunctional protein HisB (382 aa).

The histidinol-phosphatase stretch occupies residues 1–190 (MQKIVFIDRD…EIYEFLRLPA (190 aa)). Catalysis depends on aspartate 8, which acts as the Nucleophile. 3 residues coordinate Mg(2+): aspartate 8, aspartate 10, and aspartate 129. Aspartate 10 (proton donor) is an active-site residue. The tract at residues 191–382 (RTALVERNTK…DNLPSTKGVL (192 aa)) is imidazoleglycerol-phosphate dehydratase.

This sequence in the N-terminal section; belongs to the histidinol-phosphatase family. The protein in the C-terminal section; belongs to the imidazoleglycerol-phosphate dehydratase family. It depends on Mg(2+) as a cofactor.

It localises to the cytoplasm. The catalysed reaction is D-erythro-1-(imidazol-4-yl)glycerol 3-phosphate = 3-(imidazol-4-yl)-2-oxopropyl phosphate + H2O. It catalyses the reaction L-histidinol phosphate + H2O = L-histidinol + phosphate. The protein operates within amino-acid biosynthesis; L-histidine biosynthesis; L-histidine from 5-phospho-alpha-D-ribose 1-diphosphate: step 6/9. It functions in the pathway amino-acid biosynthesis; L-histidine biosynthesis; L-histidine from 5-phospho-alpha-D-ribose 1-diphosphate: step 8/9. This Spirosoma linguale (strain ATCC 33905 / DSM 74 / LMG 10896 / Claus 1) protein is Histidine biosynthesis bifunctional protein HisB.